The sequence spans 292 residues: Ribosomal protein L11 methyltransferase (292 aa).

4 residues coordinate S-adenosyl-L-methionine: T144, G165, D187, and N229.

The protein belongs to the methyltransferase superfamily. PrmA family.

It localises to the cytoplasm. The enzyme catalyses L-lysyl-[protein] + 3 S-adenosyl-L-methionine = N(6),N(6),N(6)-trimethyl-L-lysyl-[protein] + 3 S-adenosyl-L-homocysteine + 3 H(+). In terms of biological role, methylates ribosomal protein L11. In Saccharophagus degradans (strain 2-40 / ATCC 43961 / DSM 17024), this protein is Ribosomal protein L11 methyltransferase.